The primary structure comprises 405 residues: uncharacterized protein (405 aa).

12 consecutive transmembrane segments (helical) span residues 19–39 (IVSI…PLAV), 47–67 (VMGF…FATL), 85–105 (IVVF…TAGL), 107–127 (ASLP…LGIG), 156–176 (GIVT…FYHW), 178–198 (GLQA…LLAI), 224–244 (GMAL…ITLF), 252–272 (GAAF…LLFP), 283–303 (VAMI…VATM), 309–329 (IGVL…GVVA), 344–364 (TYTV…GLVM), and 366–386 (WAGV…ALLL).

It belongs to the major facilitator superfamily. YhhS family.

It localises to the cell inner membrane. This is an uncharacterized protein from Escherichia coli O6:H1 (strain CFT073 / ATCC 700928 / UPEC).